The chain runs to 451 residues: Bifunctional protein GlmU (451 aa).

Residues 1–225 (MSLAVVILAA…EFEIQGVNDR (225 aa)) form a pyrophosphorylase region. Residues 8–11 (LAAG), Lys-22, Gln-73, 78–79 (GT), 99–101 (YGD), Gly-135, Glu-150, Asn-165, and Asn-223 contribute to the UDP-N-acetyl-alpha-D-glucosamine site. A Mg(2+)-binding site is contributed by Asp-101. Residue Asn-223 coordinates Mg(2+). Residues 226-246 (IQLAQLEREWQKHIAEVIMSK) are linker. The segment at 247–451 (GVSVADPSRI…IDTWQRPVKK (205 aa)) is N-acetyltransferase. The UDP-N-acetyl-alpha-D-glucosamine site is built by Arg-329 and Lys-347. His-359 acts as the Proton acceptor in catalysis. Tyr-362 and Asn-373 together coordinate UDP-N-acetyl-alpha-D-glucosamine. Residues Ala-376, 382–383 (NY), Ser-401, Ala-419, and Arg-436 contribute to the acetyl-CoA site.

It in the N-terminal section; belongs to the N-acetylglucosamine-1-phosphate uridyltransferase family. This sequence in the C-terminal section; belongs to the transferase hexapeptide repeat family. Homotrimer. Requires Mg(2+) as cofactor.

It is found in the cytoplasm. It catalyses the reaction alpha-D-glucosamine 1-phosphate + acetyl-CoA = N-acetyl-alpha-D-glucosamine 1-phosphate + CoA + H(+). It carries out the reaction N-acetyl-alpha-D-glucosamine 1-phosphate + UTP + H(+) = UDP-N-acetyl-alpha-D-glucosamine + diphosphate. The protein operates within nucleotide-sugar biosynthesis; UDP-N-acetyl-alpha-D-glucosamine biosynthesis; N-acetyl-alpha-D-glucosamine 1-phosphate from alpha-D-glucosamine 6-phosphate (route II): step 2/2. Its pathway is nucleotide-sugar biosynthesis; UDP-N-acetyl-alpha-D-glucosamine biosynthesis; UDP-N-acetyl-alpha-D-glucosamine from N-acetyl-alpha-D-glucosamine 1-phosphate: step 1/1. It participates in bacterial outer membrane biogenesis; LPS lipid A biosynthesis. In terms of biological role, catalyzes the last two sequential reactions in the de novo biosynthetic pathway for UDP-N-acetylglucosamine (UDP-GlcNAc). The C-terminal domain catalyzes the transfer of acetyl group from acetyl coenzyme A to glucosamine-1-phosphate (GlcN-1-P) to produce N-acetylglucosamine-1-phosphate (GlcNAc-1-P), which is converted into UDP-GlcNAc by the transfer of uridine 5-monophosphate (from uridine 5-triphosphate), a reaction catalyzed by the N-terminal domain. This chain is Bifunctional protein GlmU, found in Francisella philomiragia subsp. philomiragia (strain ATCC 25017 / CCUG 19701 / FSC 153 / O#319-036).